The following is a 134-amino-acid chain: UPF0715 membrane protein YoaG (134 aa).

Helical transmembrane passes span 9 to 29, 35 to 55, 72 to 92, and 106 to 126; these read LMTL…YSFV, IIAL…YGLF, VMYL…FFVI, and FYYM…SLIL.

It belongs to the UPF0715 family.

The protein resides in the cell membrane. This Bacillus subtilis (strain 168) protein is UPF0715 membrane protein YoaG (yoaG).